The primary structure comprises 474 residues: MQLSSYTELREQLLAGSLRCEEVVRSYLERIDAAREDNIFITVFHERALERARMLDRKLAEGGTVGKLFGLPMAIKDNIAMKGERLTCASKILENYESVFDATVILRLEAEDAIFLGKTNMDEFAMGSSNENSAFGNVPNPFDKSRVPGGSSGGSAAAVAANLALVALGSDTGGSVRQPAGFCDIVGLKPTYGRISRFGLVAFASSFDQIGVLARTCGDAALVLEVMAGKDERDATSSAHQVDSYHSMMERVSPEGLKIGVPQEFFTDALNADVARLVLATLDDLRNRGAELVDITLPDSAYAIAAYYILVTAEASSNLARFDGARYGFRTSEAADLAAMYVNSRTEGFGREVKRRIMLGTYVLSAGYYDTYYKKAQQVRRYFQDQYRAALQHVDVIAGPTSPFPPFGLGDKTGDPLEMYLADVFTVPASIVGMPAVSVPLGFDSQKLPVGMHLVGNFFEEGKLLGIARMMQRA.

Catalysis depends on charge relay system residues Lys-76 and Ser-151. The Acyl-ester intermediate role is filled by Ser-175.

The protein belongs to the amidase family. GatA subfamily. Heterotrimer of A, B and C subunits.

It catalyses the reaction L-glutamyl-tRNA(Gln) + L-glutamine + ATP + H2O = L-glutaminyl-tRNA(Gln) + L-glutamate + ADP + phosphate + H(+). Functionally, allows the formation of correctly charged Gln-tRNA(Gln) through the transamidation of misacylated Glu-tRNA(Gln) in organisms which lack glutaminyl-tRNA synthetase. The reaction takes place in the presence of glutamine and ATP through an activated gamma-phospho-Glu-tRNA(Gln). In Chlorobium chlorochromatii (strain CaD3), this protein is Glutamyl-tRNA(Gln) amidotransferase subunit A.